The following is a 311-amino-acid chain: Malate dehydrogenase (311 aa).

NAD(+)-binding positions include 7 to 13 (GAAGGIG) and D34. R81 and R87 together coordinate substrate. Residues N94 and 117–119 (ITN) each bind NAD(+). Residues N119 and R153 each coordinate substrate. Catalysis depends on H177, which acts as the Proton acceptor. Position 227 (M227) interacts with NAD(+).

This sequence belongs to the LDH/MDH superfamily. MDH type 1 family. As to quaternary structure, homodimer.

It carries out the reaction (S)-malate + NAD(+) = oxaloacetate + NADH + H(+). In terms of biological role, catalyzes the reversible oxidation of malate to oxaloacetate. In Yersinia enterocolitica serotype O:8 / biotype 1B (strain NCTC 13174 / 8081), this protein is Malate dehydrogenase.